The following is a 240-amino-acid chain: Eukaryotic translation initiation factor 4E-2 (240 aa).

The disordered stretch occupies residues 1–29 (MVVMDSPVSGRMADQNIDPNTTTSPSPIE). Positions 17–26 (IDPNTTTSPS) are enriched in polar residues. 2 EIF4G-binding regions span residues 65-68 (HCFQ) and 75-111 (FDNPSSKSNQVIWGSSLRSLYTFATIEEFWSLYNNIH). MRNA-binding positions include 83–88 (NQVIWG), Lys115, and 133–134 (WE). Cys138 and Cys176 are joined by a disulfide. An EIF4G-binding region spans residues 159–168 (NTLLALVGEQ). MRNA contacts are provided by residues 183–188 (RTRGDR) and 228–232 (KTLDR).

This sequence belongs to the eukaryotic initiation factor 4E family. In terms of assembly, EIF4F is a multi-subunit complex, the composition of which varies with external and internal environmental conditions. It is composed of at least EIF4A, EIF4E and EIF4G. EIF4E is also known to interact with other partners. In higher plants two isoforms of EIF4F have been identified, named isoform EIF4F and isoform EIF(iso)4F. Isoform EIF4F has subunits p220 and p26, whereas isoform EIF(iso)4F has subunits p82 and p28. Post-translationally, according to the redox status, the Cys-138-Cys-176 disulfide bridge may have a role in regulating protein function by affecting its ability to bind capped mRNA.

Its subcellular location is the nucleus. It is found in the cytoplasm. In terms of biological role, component of the protein complex eIF4F, which is involved in the recognition of the mRNA cap, ATP-dependent unwinding of 5'-terminal secondary structure and recruitment of mRNA to the ribosome. Recognizes and binds the 7-methylguanosine-containing mRNA cap during an early step in the initiation of protein synthesis and facilitates ribosome binding by inducing the unwinding of the mRNAs secondary structures. This chain is Eukaryotic translation initiation factor 4E-2, found in Arabidopsis thaliana (Mouse-ear cress).